The chain runs to 593 residues: Methionine--tRNA ligase, mitochondrial (593 aa).

A mitochondrion-targeting transit peptide spans 1-29 (MLRVSAFRLLGRRGASRVSLLEDFSFRYY). The short motif at 52–62 (FYVNAAPHIGH) is the 'HIGH' region element. Positions 347–351 (KMSKS) match the 'KMSKS' region motif. Lysine 350 serves as a coordination point for ATP.

Belongs to the class-I aminoacyl-tRNA synthetase family.

The protein localises to the mitochondrion matrix. It carries out the reaction tRNA(Met) + L-methionine + ATP = L-methionyl-tRNA(Met) + AMP + diphosphate. The chain is Methionine--tRNA ligase, mitochondrial (MARS2) from Bos taurus (Bovine).